We begin with the raw amino-acid sequence, 140 residues long: MSVWGAWKPNTPVGYKELKSSEIIDTQIMDEALKRRTTIVLCLLSAFPRDICRDILRRTSSHIVGLGRSRYARRRRALQIGRCERCYRVYPPVCGSKCDNKTCRPGLSINTNVANYIDHGVTEVIPWISPHRGQFYLRPK.

The basic stretch occupies residues 73–76 (RRRR). 2 C4-type zinc fingers span residues 83–98 (CERC…GSKC) and 83–103 (CERC…NKTC).

This sequence belongs to the carlaviruses nucleic acid-binding protein family.

Suppressor of viral-induced RNA silencing. The potential mechanism of action is based on sequestering siRNAs. The chain is RNA silencing suppressor from Lily symptomless virus (LSV).